We begin with the raw amino-acid sequence, 204 residues long: FMN-dependent NADH:quinone oxidoreductase (204 aa).

FMN-binding positions include S10, 16-18 (SIS), and 96-99 (MYNF).

It belongs to the azoreductase type 1 family. Homodimer. FMN serves as cofactor.

The catalysed reaction is 2 a quinone + NADH + H(+) = 2 a 1,4-benzosemiquinone + NAD(+). The enzyme catalyses N,N-dimethyl-1,4-phenylenediamine + anthranilate + 2 NAD(+) = 2-(4-dimethylaminophenyl)diazenylbenzoate + 2 NADH + 2 H(+). In terms of biological role, quinone reductase that provides resistance to thiol-specific stress caused by electrophilic quinones. Also exhibits azoreductase activity. Catalyzes the reductive cleavage of the azo bond in aromatic azo compounds to the corresponding amines. This Herminiimonas arsenicoxydans protein is FMN-dependent NADH:quinone oxidoreductase.